Reading from the N-terminus, the 290-residue chain is S-adenosylmethionine decarboxylase proenzyme (290 aa).

Residue S138 is the Schiff-base intermediate with substrate; via pyruvic acid of the active site. Residue S138 is modified to Pyruvic acid (Ser); by autocatalysis. The active-site Proton acceptor; for processing activity is the H143. C166 acts as the Proton donor; for catalytic activity in catalysis.

It belongs to the prokaryotic AdoMetDC family. Type 2 subfamily. As to quaternary structure, heterooctamer of four alpha and four beta chains arranged as a tetramer of alpha/beta heterodimers. It depends on pyruvate as a cofactor. Post-translationally, is synthesized initially as an inactive proenzyme. Formation of the active enzyme involves a self-maturation process in which the active site pyruvoyl group is generated from an internal serine residue via an autocatalytic post-translational modification. Two non-identical subunits are generated from the proenzyme in this reaction, and the pyruvate is formed at the N-terminus of the alpha chain, which is derived from the carboxyl end of the proenzyme. The post-translation cleavage follows an unusual pathway, termed non-hydrolytic serinolysis, in which the side chain hydroxyl group of the serine supplies its oxygen atom to form the C-terminus of the beta chain, while the remainder of the serine residue undergoes an oxidative deamination to produce ammonia and the pyruvoyl group blocking the N-terminus of the alpha chain.

The catalysed reaction is S-adenosyl-L-methionine + H(+) = S-adenosyl 3-(methylsulfanyl)propylamine + CO2. The protein operates within amine and polyamine biosynthesis; S-adenosylmethioninamine biosynthesis; S-adenosylmethioninamine from S-adenosyl-L-methionine: step 1/1. Functionally, catalyzes the decarboxylation of S-adenosylmethionine to S-adenosylmethioninamine (dcAdoMet), the propylamine donor required for the synthesis of the polyamines spermine and spermidine from the diamine putrescine. This Heliobacterium modesticaldum (strain ATCC 51547 / Ice1) protein is S-adenosylmethionine decarboxylase proenzyme.